The following is a 598-amino-acid chain: MTFQASHRSAWGKSRKKNWQYEGPTQKLFLKRNNVSAPDGPSDPSISVSSEQSGAQQPPALQVERIVDKRKNKKGKTEYLVRWKGYDSEDDTWEPEQHLVNCEEYIHDFNRRHTEKQKESTLTRTNRTSPNNARKQISRSTNSNFSKTSPKALVIGKDHESKNSQLFAASQKFRKNTAPSLSSRKNMDLAKSGIKILVPKSPVKSRTAVDGFQSESPEKLDPVEQGQEDTVAPEVAAEKPVGALLGPGAERARMGSRPRIHPLVPQVPGPVTAAMATGLAVNGKGTSPFMDALTANGTTNIQTSVTGVTASKRKFIDDRRDQPFDKRLRFSVRQTESAYRYRDIVVRKQDGFTHILLSTKSSENNSLNPEVMREVQSALSTAAADDSKLVLLSAVGSVFCCGLDFIYFIRRLTDDRKRESTKMAEAIRNFVNTFIQFKKPIIVAVNGPAIGLGASILPLCDVVWANEKAWFQTPYTTFGQSPDGCSTVMFPKIMGGASANEMLLSGRKLTAQEACGKGLVSQVFWPGTFTQEVMVRIKELASCNPVVLEESKALVRCNMKMELEQANERECEVLKKIWGSAQGMDSMLKYLQRKIDEF.

The tract at residues 1–76 (MTFQASHRSA…VDKRKNKKGK (76 aa)) is disordered. Residues 44–56 (PSISVSSEQSGAQ) are compositionally biased toward polar residues. Residues 61–121 (LQVERIVDKR…RHTEKQKEST (61 aa)) form the Chromo domain. The tract at residues 61–309 (LQVERIVDKR…NIQTSVTGVT (249 aa)) is interaction with EZH2. The segment covering 65–76 (RIVDKRKNKKGK) has biased composition (basic and acidic residues). Ser-88 is subject to Phosphoserine. The span at 112 to 121 (RHTEKQKEST) shows a compositional bias: basic and acidic residues. A disordered region spans residues 112-149 (RHTEKQKESTLTRTNRTSPNNARKQISRSTNSNFSKTS). Residues 122–149 (LTRTNRTSPNNARKQISRSTNSNFSKTS) show a composition bias toward polar residues. Lys-135 bears the N6,N6,N6-trimethyllysine; by EHMT2; alternate mark. Residue Lys-135 is modified to N6,N6-dimethyllysine; by EHMT2; alternate. An N6-methyllysine; by EHMT2; alternate modification is found at Lys-135. Ser-170, Ser-201, and Ser-216 each carry phosphoserine. A disordered region spans residues 204–226 (KSRTAVDGFQSESPEKLDPVEQG). Residues 362–594 (SENNSLNPEV…DSMLKYLQRK (233 aa)) are acetyl-CoA-binding domain.

As to quaternary structure, forms multimers and multimerization is required for stable binding to chromatin. Interacts with HDAC1 and HDAC2 via its C-terminal acetyl-CoA-binding domain. Interacts with EZH2, EED, SUZ12, REST, EHMT1 and EHMT2. Part of a complex containing at least CDYL, REST, WIZ, SETB1, EHMT1 and EHMT2. Part of a complex containing at least CDYL, MIER1, MIER2, HDAC1 and HDAC2. Interacts with CHAF1A and CHAF1B; bridging the CAF-1 complex to the MCM2-7 (MCM) complex. Interacts with MCM3 and MCM5; bridging the CAF-1 complex to the MCM2-7 (MCM) complex. Recruited to Xist RNA-coated X chromosome. Interacts with EHMT2 and PRDM9; interaction only takes place when PRDM9 is bound to hotspot DNA. Expressed in the hippocampus with reduced expression in epileptic tissue compared to normal adjacent tissue (at protein level). Ubiquitous. Expressed at moderate levels in all tissues examined. Isoform 2: Most abundantly expressed isoform.

It is found in the nucleus. The protein resides in the chromosome. It carries out the reaction 3-hydroxybutanoyl-CoA = (2E)-butenoyl-CoA + H2O. Its function is as follows. Chromatin reader protein that recognizes and binds histone H3 trimethylated at 'Lys-9', dimethylated at 'Lys-27' and trimethylated at 'Lys-27' (H3K9me3, H3K27me2 and H3K27me3, respectively). Part of multimeric repressive chromatin complexes, where it is required for transmission and restoration of repressive histone marks, thereby preserving the epigenetic landscape. Required for chromatin targeting and maximal enzymatic activity of Polycomb repressive complex 2 (PRC2); acts as a positive regulator of PRC2 activity by bridging the pre-existing histone H3K27me3 and newly recruited PRC2 on neighboring nucleosomes. Acts as a corepressor for REST by facilitating histone-lysine N-methyltransferase EHMT2 recruitment and H3K9 dimethylation at REST target genes for repression. Involved in X chromosome inactivation in females: recruited to Xist RNA-coated X chromosome and facilitates propagation of H3K9me2 by anchoring EHMT2. Promotes EZH2 accumulation and H3K27me3 methylation at DNA double strand breaks (DSBs), thereby facilitating transcriptional repression at sites of DNA damage and homology-directed repair of DSBs. Required for neuronal migration during brain development by repressing expression of RHOA. By repressing the expression of SCN8A, contributes to the inhibition of intrinsic neuronal excitability and epileptogenesis. In addition to acting as a chromatin reader, acts as a hydro-lyase. Shows crotonyl-coA hydratase activity by mediating the conversion of crotonyl-CoA ((2E)-butenoyl-CoA) to beta-hydroxybutyryl-CoA (3-hydroxybutanoyl-CoA), thereby acting as a negative regulator of histone crotonylation. Histone crotonylation is required during spermatogenesis; down-regulation of histone crotonylation by CDYL regulates the reactivation of sex chromosome-linked genes in round spermatids and histone replacement in elongating spermatids. By regulating histone crotonylation and trimethylation of H3K27, may be involved in stress-induced depression-like behaviors, possibly by regulating VGF expression. Functionally, not able to recognize and bind histone H3K9me3, histone H3K27me2 and histone H3K27me3, due to the presence of a N-terminal extension that inactivates the chromo domain. In terms of biological role, not able to recognize and bind histone H3K9me3, histone H3K27me2 and histone H3K27me3, due to the absence of the chromo domain. Acts as a negative regulator of isoform 2 by displacing isoform 2 from chromatin. The protein is Chromodomain Y-like protein of Homo sapiens (Human).